The following is a 584-amino-acid chain: NADPH-dependent diflavin oxidoreductase 1 (584 aa).

Residues 6–150 (IYILYGSETG…VFAYWCNHLY (145 aa)) enclose the Flavodoxin-like domain. FMN is bound by residues 12-17 (SETGTA), 59-62 (STTG), 97-106 (CGDTSYTRFN), and glutamate 132. In terms of domain architecture, FAD-binding FR-type spans 199 to 436 (RGKIEATLVH…LPGFLNLSYQ (238 aa)). FAD contacts are provided by residues arginine 343, 373-376 (RQYS), and 407-410 (GICS). Residues threonine 448, 503–504 (SR), and 509–513 (KKYVQ) contribute to the NADP(+) site. Residue tryptophan 584 coordinates FAD.

The protein belongs to the NADPH-dependent diflavin oxidoreductase NDOR1 family. In the N-terminal section; belongs to the flavodoxin family. This sequence in the C-terminal section; belongs to the flavoprotein pyridine nucleotide cytochrome reductase family. As to quaternary structure, interacts with dre2; as part of the cytosolic iron-sulfur (Fe-S) protein assembly (CIA) machinery. It depends on FAD as a cofactor. FMN serves as cofactor.

It localises to the cytoplasm. It is found in the mitochondrion. It carries out the reaction 2 oxidized [2Fe-2S]-[protein] + NADPH = 2 reduced [2Fe-2S]-[protein] + NADP(+) + H(+). Its function is as follows. NADPH-dependent reductase which is a central component of the cytosolic iron-sulfur (Fe-S) protein assembly (CIA) machinery. Transfers electrons from NADPH via its FAD and FMN prosthetic groups to the [2Fe-2S] cluster of dre2, another key component of the CIA machinery. In turn, this reduced cluster provides electrons for assembly of cytosolic iron-sulfur cluster proteins. Positively controls H(2)O(2)-induced cell death. The polypeptide is NADPH-dependent diflavin oxidoreductase 1 (Schizosaccharomyces pombe (strain 972 / ATCC 24843) (Fission yeast)).